The sequence spans 935 residues: Coiled-coil domain-containing protein 191 (935 aa).

Coiled coils occupy residues 189–324 (RLTM…ENQQ), 366–438 (YTRS…ALLK), 554–589 (RHVF…AEAQ), and 660–740 (KAME…LEAI). Disordered regions lie at residues 596-661 (SAVT…ILKA) and 678-715 (EKKK…RKRE).

In Macaca fascicularis (Crab-eating macaque), this protein is Coiled-coil domain-containing protein 191 (CCDC191).